The primary structure comprises 32 residues: Snaclec (32 aa).

As to quaternary structure, dimer; disulfide-linked. Expressed by the venom gland.

Its subcellular location is the secreted. In terms of biological role, interferes with one step of hemostasis (modulation of platelet aggregation, or coagulation cascade, for example). The polypeptide is Snaclec (Bothrops diporus (Chaco lancehead)).